The following is a 341-amino-acid chain: UPF0283 membrane protein HD_1769 (341 aa).

Transmembrane regions (helical) follow at residues 57 to 77, 86 to 106, and 204 to 224; these read LLAV…QCLI, IDLA…GAII, and ENAI…MIAW.

The protein belongs to the UPF0283 family.

Its subcellular location is the cell inner membrane. This is UPF0283 membrane protein HD_1769 from Haemophilus ducreyi (strain 35000HP / ATCC 700724).